The following is a 503-amino-acid chain: Aspartyl/glutamyl-tRNA(Asn/Gln) amidotransferase subunit B (503 aa).

It belongs to the GatB/GatE family. GatB subfamily. Heterotrimer of A, B and C subunits.

The catalysed reaction is L-glutamyl-tRNA(Gln) + L-glutamine + ATP + H2O = L-glutaminyl-tRNA(Gln) + L-glutamate + ADP + phosphate + H(+). It carries out the reaction L-aspartyl-tRNA(Asn) + L-glutamine + ATP + H2O = L-asparaginyl-tRNA(Asn) + L-glutamate + ADP + phosphate + 2 H(+). In terms of biological role, allows the formation of correctly charged Asn-tRNA(Asn) or Gln-tRNA(Gln) through the transamidation of misacylated Asp-tRNA(Asn) or Glu-tRNA(Gln) in organisms which lack either or both of asparaginyl-tRNA or glutaminyl-tRNA synthetases. The reaction takes place in the presence of glutamine and ATP through an activated phospho-Asp-tRNA(Asn) or phospho-Glu-tRNA(Gln). The polypeptide is Aspartyl/glutamyl-tRNA(Asn/Gln) amidotransferase subunit B (Cereibacter sphaeroides (strain ATCC 17029 / ATH 2.4.9) (Rhodobacter sphaeroides)).